The primary structure comprises 273 residues: Glutamate 5-kinase (273 aa).

Residue K15 participates in ATP binding. S55, D142, and N158 together coordinate substrate. ATP-binding positions include 178–179 and 220–226; these read SD and TGGMLSK.

This sequence belongs to the glutamate 5-kinase family.

The protein localises to the cytoplasm. The catalysed reaction is L-glutamate + ATP = L-glutamyl 5-phosphate + ADP. It functions in the pathway amino-acid biosynthesis; L-proline biosynthesis; L-glutamate 5-semialdehyde from L-glutamate: step 1/2. Catalyzes the transfer of a phosphate group to glutamate to form L-glutamate 5-phosphate. In Streptococcus pyogenes serotype M3 (strain ATCC BAA-595 / MGAS315), this protein is Glutamate 5-kinase.